Consider the following 591-residue polypeptide: Protein NRT1/ PTR FAMILY 4.3 (591 aa).

The segment covering 1-10 has biased composition (polar residues); it reads MAEINKQSNK. The interval 1 to 38 is disordered; the sequence is MAEINKQSNKWEQEEVSNENNWELAEEESVDWRGRPSN. 12 helical membrane passes run 47 to 67, 85 to 105, 109 to 129, 157 to 177, 204 to 224, 233 to 253, 347 to 367, 395 to 415, 429 to 449, 463 to 483, 502 to 522, and 551 to 571; these read AALF…AVGN, ANIV…GGYL, FLGS…GFIL, GFKA…SGCV, FNAA…LLVW, IGFG…VSGT, LISL…LAQL, AIPY…LVPF, LTRI…AAML, ILSI…EMFT, FLMA…SVLV, and LFYW…LFWS.

Belongs to the major facilitator superfamily. Proton-dependent oligopeptide transporter (POT/PTR) (TC 2.A.17) family. In terms of tissue distribution, expressed in flowers. Detected in roots and siliques.

The protein localises to the membrane. The sequence is that of Protein NRT1/ PTR FAMILY 4.3 (NPF4.3) from Arabidopsis thaliana (Mouse-ear cress).